The sequence spans 195 residues: 7-methyl-GTP pyrophosphatase (195 aa).

Asp71 (proton acceptor) is an active-site residue.

It belongs to the Maf family. YceF subfamily. A divalent metal cation serves as cofactor.

The protein localises to the cytoplasm. It carries out the reaction N(7)-methyl-GTP + H2O = N(7)-methyl-GMP + diphosphate + H(+). In terms of biological role, nucleoside triphosphate pyrophosphatase that hydrolyzes 7-methyl-GTP (m(7)GTP). May have a dual role in cell division arrest and in preventing the incorporation of modified nucleotides into cellular nucleic acids. The protein is 7-methyl-GTP pyrophosphatase of Shewanella oneidensis (strain ATCC 700550 / JCM 31522 / CIP 106686 / LMG 19005 / NCIMB 14063 / MR-1).